We begin with the raw amino-acid sequence, 510 residues long: GTPase Der (510 aa).

2 consecutive EngA-type G domains span residues 3–167 (LKLA…GPEA) and 230–405 (IRLA…KDWT). Residues 9–16 (GRPNVGKS), 56–60 (DTAGF), 119–122 (NKAE), 236–243 (GRPNAGKS), 283–287 (DTAGL), and 348–351 (SKWD) contribute to the GTP site. Residues 406–490 (ARAKTGDLNR…PIRLFVRQGK (85 aa)) enclose the KH-like domain.

Belongs to the TRAFAC class TrmE-Era-EngA-EngB-Septin-like GTPase superfamily. EngA (Der) GTPase family. As to quaternary structure, associates with the 50S ribosomal subunit.

Its function is as follows. GTPase that plays an essential role in the late steps of ribosome biogenesis. The sequence is that of GTPase Der from Hyphomonas neptunium (strain ATCC 15444).